Consider the following 90-residue polypeptide: Probable Fe(2+)-trafficking protein (90 aa).

Belongs to the Fe(2+)-trafficking protein family.

Its function is as follows. Could be a mediator in iron transactions between iron acquisition and iron-requiring processes, such as synthesis and/or repair of Fe-S clusters in biosynthetic enzymes. This is Probable Fe(2+)-trafficking protein from Pseudomonas fluorescens (strain ATCC BAA-477 / NRRL B-23932 / Pf-5).